A 52-amino-acid chain; its full sequence is UPF0391 membrane protein ABAYE0050 (52 aa).

Transmembrane regions (helical) follow at residues 6 to 26 (IIFA…VAGL) and 30 to 50 (FAVI…ISRG).

The protein belongs to the UPF0391 family.

The protein resides in the cell membrane. The protein is UPF0391 membrane protein ABAYE0050 of Acinetobacter baumannii (strain AYE).